Consider the following 323-residue polypeptide: Aspartate carbamoyltransferase catalytic subunit (323 aa).

2 residues coordinate carbamoyl phosphate: arginine 71 and threonine 72. An L-aspartate-binding site is contributed by lysine 99. Carbamoyl phosphate contacts are provided by arginine 121, histidine 151, and glutamine 154. Residues arginine 184 and arginine 239 each coordinate L-aspartate. Residues glycine 280 and proline 281 each contribute to the carbamoyl phosphate site.

The protein belongs to the aspartate/ornithine carbamoyltransferase superfamily. ATCase family. Heterododecamer (2C3:3R2) of six catalytic PyrB chains organized as two trimers (C3), and six regulatory PyrI chains organized as three dimers (R2).

It carries out the reaction carbamoyl phosphate + L-aspartate = N-carbamoyl-L-aspartate + phosphate + H(+). Its pathway is pyrimidine metabolism; UMP biosynthesis via de novo pathway; (S)-dihydroorotate from bicarbonate: step 2/3. Its function is as follows. Catalyzes the condensation of carbamoyl phosphate and aspartate to form carbamoyl aspartate and inorganic phosphate, the committed step in the de novo pyrimidine nucleotide biosynthesis pathway. The chain is Aspartate carbamoyltransferase catalytic subunit from Cupriavidus metallidurans (strain ATCC 43123 / DSM 2839 / NBRC 102507 / CH34) (Ralstonia metallidurans).